We begin with the raw amino-acid sequence, 247 residues long: 1-(5-phosphoribosyl)-5-[(5-phosphoribosylamino)methylideneamino] imidazole-4-carboxamide isomerase (247 aa).

The Proton acceptor role is filled by aspartate 8. Aspartate 130 (proton donor) is an active-site residue.

Belongs to the HisA/HisF family.

It is found in the cytoplasm. The catalysed reaction is 1-(5-phospho-beta-D-ribosyl)-5-[(5-phospho-beta-D-ribosylamino)methylideneamino]imidazole-4-carboxamide = 5-[(5-phospho-1-deoxy-D-ribulos-1-ylimino)methylamino]-1-(5-phospho-beta-D-ribosyl)imidazole-4-carboxamide. It participates in amino-acid biosynthesis; L-histidine biosynthesis; L-histidine from 5-phospho-alpha-D-ribose 1-diphosphate: step 4/9. The chain is 1-(5-phosphoribosyl)-5-[(5-phosphoribosylamino)methylideneamino] imidazole-4-carboxamide isomerase from Stutzerimonas stutzeri (strain A1501) (Pseudomonas stutzeri).